The following is a 461-amino-acid chain: Probable carboxypeptidase MGYG_04702 (461 aa).

An N-terminal signal peptide occupies residues 1-20; it reads MQKTYLLALVSLLASSLVEA. N-linked (GlcNAc...) asparagine glycans are attached at residues Asn-48 and Asn-99. Asp-176 serves as a coordination point for Zn(2+). Glu-208 serves as the catalytic Proton acceptor. Position 209 (Glu-209) interacts with Zn(2+). A glycan (N-linked (GlcNAc...) asparagine) is linked at Asn-396.

This sequence belongs to the peptidase M20A family. Requires Zn(2+) as cofactor.

It is found in the secreted. This is Probable carboxypeptidase MGYG_04702 from Arthroderma gypseum (strain ATCC MYA-4604 / CBS 118893) (Microsporum gypseum).